A 413-amino-acid polypeptide reads, in one-letter code: Gamma-glutamyl phosphate reductase (413 aa).

It belongs to the gamma-glutamyl phosphate reductase family.

The protein resides in the cytoplasm. It catalyses the reaction L-glutamate 5-semialdehyde + phosphate + NADP(+) = L-glutamyl 5-phosphate + NADPH + H(+). It participates in amino-acid biosynthesis; L-proline biosynthesis; L-glutamate 5-semialdehyde from L-glutamate: step 2/2. Functionally, catalyzes the NADPH-dependent reduction of L-glutamate 5-phosphate into L-glutamate 5-semialdehyde and phosphate. The product spontaneously undergoes cyclization to form 1-pyrroline-5-carboxylate. The chain is Gamma-glutamyl phosphate reductase from Alkaliphilus oremlandii (strain OhILAs) (Clostridium oremlandii (strain OhILAs)).